Here is a 556-residue protein sequence, read N- to C-terminus: MQFDYIIIGAGSAGNVLATRLTEDPNTSVLLLEAGGPDYRFDFRTQMPAALAFPLQGKRYNWAYETEPEPFMNNRRMECGRGKGLGGSSLINGMCYIRGNALDLDNWAQEPGLENWSYLDCLPYYRKAETRDVGENDYHGGDGPVSVTTSKPGVNPLFEAMIEAGVQAGYPRTDDLNGYQQEGFGPMDRTVTPQGRRASTARGYLDQAKSRPNLTIRTHAMTDHIIFDGKRAVGVEWLEGDSTIPTRATANKEVLLCAGAIASPQILQRSGVGNAELLAEFDIPLVHELPGVGENLQDHLEMYLQYECKEPVSLYPALQWWNQPKIGAEWLFGGTGVGASNHFEAGGFIRSREEFAWPNIQYHFLPVAINYNGSNAVKEHGFQCHVGSMRSPSRGHVRIKSRDPHQHPAILFNYMSHEQDWQEFRDAIRITREIMHQPALDQYRGREISPGTECQTDEQLDEFVRNHAETAFHPCGTCKMGYDEMSVVDGEGRVHGLEGLRVVDASIMPQIITGNLNATTIMIGEKIADMIRGQEALPRSTAGYFVANGMPVRAKK.

4–33 (DYIIIGAGSAGNVLATRLTEDPNTSVLLLE) serves as a coordination point for FAD. Histidine 473 (proton acceptor) is an active-site residue.

It belongs to the GMC oxidoreductase family. The cofactor is FAD.

The catalysed reaction is choline + A = betaine aldehyde + AH2. It carries out the reaction betaine aldehyde + NAD(+) + H2O = glycine betaine + NADH + 2 H(+). The protein operates within amine and polyamine biosynthesis; betaine biosynthesis via choline pathway; betaine aldehyde from choline (cytochrome c reductase route): step 1/1. Functionally, involved in the biosynthesis of the osmoprotectant glycine betaine. Catalyzes the oxidation of choline to betaine aldehyde and betaine aldehyde to glycine betaine at the same rate. This chain is Oxygen-dependent choline dehydrogenase, found in Escherichia coli O139:H28 (strain E24377A / ETEC).